A 200-amino-acid chain; its full sequence is MATARPSIVGPDSGPESPFPYKMEGKVISGFGRGSKELGIPTANLPVDATISPWISSISSGVYYGWASLQLPPSHPESPSSSSCSPYVVFPMVMSIGYNPFYNNTERSAEVHILHKFTADFYDAPMRLLILGFIRDEKNYDSLEALVKDINTDCDVARTSLDRKAWVPQGGLLHPAVDVREKQGDLDGSWLVRPNDSPSA.

Residues 1 to 20 form a disordered region; the sequence is MATARPSIVGPDSGPESPFP. Mg(2+)-binding residues include T42 and N44. E110 functions as the Nucleophile in the catalytic mechanism.

This sequence belongs to the flavokinase family. The cofactor is Zn(2+). Mg(2+) serves as cofactor.

It catalyses the reaction riboflavin + ATP = FMN + ADP + H(+). The protein operates within cofactor biosynthesis; FMN biosynthesis; FMN from riboflavin (ATP route): step 1/1. Its function is as follows. Catalyzes the phosphorylation of riboflavin (vitamin B2) to form flavin mononucleotide (FMN) coenzyme. The chain is Riboflavin kinase (FMN1) from Pyricularia oryzae (strain 70-15 / ATCC MYA-4617 / FGSC 8958) (Rice blast fungus).